The chain runs to 572 residues: Methionine--tRNA ligase (572 aa).

A 'HIGH' region motif is present at residues 11-21 (PYINGIKHLGN). 4 residues coordinate Zn(2+): Cys-143, Cys-146, Cys-156, and Cys-159. A 'KMSKS' region motif is present at residues 346–350 (QFSTS). Thr-349 is a binding site for ATP.

The protein belongs to the class-I aminoacyl-tRNA synthetase family. MetG type 1 subfamily. As to quaternary structure, monomer. Zn(2+) serves as cofactor.

The protein resides in the cytoplasm. It catalyses the reaction tRNA(Met) + L-methionine + ATP = L-methionyl-tRNA(Met) + AMP + diphosphate. Is required not only for elongation of protein synthesis but also for the initiation of all mRNA translation through initiator tRNA(fMet) aminoacylation. The polypeptide is Methionine--tRNA ligase (Paracoccus denitrificans (strain Pd 1222)).